The sequence spans 470 residues: Carboxypeptidase Q (470 aa).

The signal sequence occupies residues methionine 1 to glycine 18. The propeptide occupies lysine 19–glutamate 42. Asparagine 59 carries an N-linked (GlcNAc...) asparagine glycan. The Zn(2+) site is built by histidine 288 and aspartate 300. Glutamate 334 serves as the catalytic Nucleophile. Glutamate 335 serves as a coordination point for Zn(2+). An N-linked (GlcNAc...) asparagine glycan is attached at asparagine 351. Position 362 (aspartate 362) interacts with Zn(2+). The N-linked (GlcNAc...) asparagine glycan is linked to asparagine 394. Histidine 432 contacts Zn(2+).

The protein belongs to the peptidase M28 family. Homodimer. The monomeric form is inactive while the homodimer is active. In terms of processing, N-glycosylated. The secreted form is modified by hybrid or complex type oligosaccharide chains.

Its subcellular location is the endoplasmic reticulum. The protein resides in the golgi apparatus. The protein localises to the lysosome. It localises to the secreted. Its function is as follows. Carboxypeptidase that may play an important role in the hydrolysis of circulating peptides. Catalyzes the hydrolysis of dipeptides with unsubstituted terminals into amino acids. May play a role in the liberation of thyroxine hormone from its thyroglobulin (Tg) precursor. In Mus musculus (Mouse), this protein is Carboxypeptidase Q (Cpq).